A 289-amino-acid chain; its full sequence is ATP synthase subunit a (289 aa).

The next 6 helical transmembrane spans lie at 43-63, 103-123, 160-180, 193-213, 232-252, and 259-279; these read AFHL…LFIF, VIAP…AVDL, FCVF…GGFI, IFVQ…TLIA, VFIL…GLGV, and AVFH…LTIV.

Belongs to the ATPase A chain family. As to quaternary structure, F-type ATPases have 2 components, CF(1) - the catalytic core - and CF(0) - the membrane proton channel. CF(1) has five subunits: alpha(3), beta(3), gamma(1), delta(1), epsilon(1). CF(0) has three main subunits: a(1), b(2) and c(9-12). The alpha and beta chains form an alternating ring which encloses part of the gamma chain. CF(1) is attached to CF(0) by a central stalk formed by the gamma and epsilon chains, while a peripheral stalk is formed by the delta and b chains.

It is found in the cell inner membrane. Functionally, key component of the proton channel; it plays a direct role in the translocation of protons across the membrane. In Pseudomonas putida (strain GB-1), this protein is ATP synthase subunit a.